Reading from the N-terminus, the 140-residue chain is 3-hydroxyacyl-[acyl-carrier-protein] dehydratase FabZ (140 aa).

Residue H47 is part of the active site.

It belongs to the thioester dehydratase family. FabZ subfamily.

The protein localises to the cytoplasm. It catalyses the reaction a (3R)-hydroxyacyl-[ACP] = a (2E)-enoyl-[ACP] + H2O. Its function is as follows. Involved in unsaturated fatty acids biosynthesis. Catalyzes the dehydration of short chain beta-hydroxyacyl-ACPs and long chain saturated and unsaturated beta-hydroxyacyl-ACPs. This chain is 3-hydroxyacyl-[acyl-carrier-protein] dehydratase FabZ, found in Streptococcus uberis (strain ATCC BAA-854 / 0140J).